The primary structure comprises 373 residues: D-amino-acid oxidase 3 (373 aa).

Residues Met-1–Ala-19 form the signal peptide. The FAD site is built by Ser-11, Leu-14, Asp-35, Ala-46, Ser-47, Gly-51, and Asn-53. Phe-57 is a binding site for anthranilate. Residue Asn-180 is glycosylated (N-linked (GlcNAc...) asparagine). A disulfide bridge connects residues Cys-214 and Cys-271. Anthranilate-binding residues include Tyr-229, Tyr-246, and Arg-296. 3 residues coordinate (R)-lactate: Tyr-229, Tyr-246, and Arg-296. Arg-296, Gly-342, Gly-345, Tyr-346, and Gln-347 together coordinate FAD. The Microbody targeting signal signature appears at Ala-371–Leu-373.

Belongs to the DAMOX/DASOX family. FAD is required as a cofactor.

It is found in the peroxisome matrix. The catalysed reaction is a D-alpha-amino acid + O2 + H2O = a 2-oxocarboxylate + H2O2 + NH4(+). Functionally, catalyzes the oxidative deamination of D-amino acids with broad substrate specificity. Enables the organism to utilize D-amino acids as a source of nutrients. Enables the organism to utilize D-glutamate and D-methionine as a nitrogen source. Protects the organism from the toxicity of D-amino acids, including from D-glutamate. May play a role in its interaction with the host. The sequence is that of D-amino-acid oxidase 3 from Cryptococcus neoformans var. grubii serotype A (strain H99 / ATCC 208821 / CBS 10515 / FGSC 9487) (Filobasidiella neoformans var. grubii).